The chain runs to 131 residues: Arsenate reductase (131 aa).

Active-site nucleophile residues include cysteine 10, cysteine 82, and cysteine 89. Intrachain disulfides connect cysteine 10-cysteine 82 and cysteine 82-cysteine 89.

Belongs to the low molecular weight phosphotyrosine protein phosphatase family. Thioredoxin-coupled ArsC subfamily.

Its subcellular location is the cytoplasm. It carries out the reaction arsenate + [thioredoxin]-dithiol + H(+) = arsenite + [thioredoxin]-disulfide + H2O. Its function is as follows. Catalyzes the reduction of arsenate [As(V)] to arsenite [As(III)]. In Staphylococcus aureus (strain bovine RF122 / ET3-1), this protein is Arsenate reductase.